The chain runs to 584 residues: Pentalenolactone D synthase (584 aa).

FAD is bound by residues 55–56 (IG), 77–78 (DG), 85–86 (TW), 97–98 (DV), Tyr103, Val147, and Met486.

The protein belongs to the FAD-binding monooxygenase family. It depends on FAD as a cofactor.

The catalysed reaction is 1-deoxy-11-oxopentalenate + NADPH + O2 + H(+) = pentalenolactone D + NADP(+) + H2O. The protein operates within antibiotic biosynthesis; pentalenolactone biosynthesis. Catalyzes the flavin-dependent Baeyer-Villiger oxidation of 1-deoxy-11-oxopentalenic acid to pentalenolactone D in the biosynthesis of pentalenolactone antibiotic. The sequence is that of Pentalenolactone D synthase (penE) from Streptomyces exfoliatus (Streptomyces hydrogenans).